The chain runs to 244 residues: LOB domain-containing protein 17 (244 aa).

The region spanning serine 6–alanine 108 is the LOB domain.

This sequence belongs to the LOB domain-containing protein family. Expressed in roots, stems, leaves and flowers.

This Arabidopsis thaliana (Mouse-ear cress) protein is LOB domain-containing protein 17 (LBD17).